The sequence spans 513 residues: 2-isopropylmalate synthase (513 aa).

The Pyruvate carboxyltransferase domain occupies 4-266 (IEFFDTSLRD…QSPLKLSETA (263 aa)). Mn(2+) is bound by residues Asp13, His201, His203, and Asn237. The segment at 390-513 (ILDNVQIDGH…VEQISAHDGI (124 aa)) is regulatory domain.

It belongs to the alpha-IPM synthase/homocitrate synthase family. LeuA type 1 subfamily. As to quaternary structure, homodimer. Requires Mn(2+) as cofactor.

The protein localises to the cytoplasm. The catalysed reaction is 3-methyl-2-oxobutanoate + acetyl-CoA + H2O = (2S)-2-isopropylmalate + CoA + H(+). Its pathway is amino-acid biosynthesis; L-leucine biosynthesis; L-leucine from 3-methyl-2-oxobutanoate: step 1/4. Catalyzes the condensation of the acetyl group of acetyl-CoA with 3-methyl-2-oxobutanoate (2-ketoisovalerate) to form 3-carboxy-3-hydroxy-4-methylpentanoate (2-isopropylmalate). This Lactococcus lactis subsp. lactis (strain IL1403) (Streptococcus lactis) protein is 2-isopropylmalate synthase.